The primary structure comprises 218 residues: Octanoyltransferase (218 aa).

In terms of domain architecture, BPL/LPL catalytic spans 32-214 (ALTPDEIWLV…HFTQLLGYND (183 aa)). Residues 71–78 (RGGQITYH), 143–145 (SLG), and 156–158 (GLA) contribute to the substrate site. C174 (acyl-thioester intermediate) is an active-site residue.

This sequence belongs to the LipB family.

It localises to the cytoplasm. It carries out the reaction octanoyl-[ACP] + L-lysyl-[protein] = N(6)-octanoyl-L-lysyl-[protein] + holo-[ACP] + H(+). It participates in protein modification; protein lipoylation via endogenous pathway; protein N(6)-(lipoyl)lysine from octanoyl-[acyl-carrier-protein]: step 1/2. In terms of biological role, catalyzes the transfer of endogenously produced octanoic acid from octanoyl-acyl-carrier-protein onto the lipoyl domains of lipoate-dependent enzymes. Lipoyl-ACP can also act as a substrate although octanoyl-ACP is likely to be the physiological substrate. The polypeptide is Octanoyltransferase (Histophilus somni (strain 129Pt) (Haemophilus somnus)).